The chain runs to 193 residues: Putative manganese efflux pump MntP (193 aa).

A run of 6 helical transmembrane segments spans residues M3 to C23, L41 to A61, I65 to I85, I106 to L126, I133 to L153, and I169 to F189.

Belongs to the MntP (TC 9.B.29) family.

It localises to the cell inner membrane. In terms of biological role, probably functions as a manganese efflux pump. The sequence is that of Putative manganese efflux pump MntP from Photorhabdus laumondii subsp. laumondii (strain DSM 15139 / CIP 105565 / TT01) (Photorhabdus luminescens subsp. laumondii).